A 351-amino-acid chain; its full sequence is LETM1 domain-containing protein 1 (351 aa).

At 1–130 the chain is on the cytoplasmic side; sequence MLSGMALCRT…FRRDIIKAAP (130 aa). Residues 131–151 form a helical membrane-spanning segment; the sequence is VVIISIPPFANYLVFVLMYFF. The Mitochondrial intermembrane segment spans residues 152–351; that stretch reads PRQLLIRHFW…SANYLQSIKQ (200 aa). The Letm1 RBD domain occupies 172–351; that stretch reads IYHRMRVEAY…SANYLQSIKQ (180 aa).

The protein localises to the mitochondrion outer membrane. It is found in the nucleus. Its subcellular location is the mitochondrion inner membrane. Its function is as follows. May play an essential role for mitochondrial structure and function. This chain is LETM1 domain-containing protein 1, found in Xenopus tropicalis (Western clawed frog).